The primary structure comprises 214 residues: Cytochrome b (214 aa).

The next 4 helical transmembrane spans lie at 31–51, 75–96, 111–131, and 176–196; these read FGSM…FLAI, WIMQ…YIHI, WLSG…GYVL, and FFAL…IHII. Residues histidine 81 and histidine 95 each coordinate heme b. Heme b-binding residues include histidine 180 and histidine 194. Histidine 199 contributes to the a ubiquinone binding site.

Belongs to the cytochrome b family. In terms of assembly, the cytochrome bc1 complex contains 3 respiratory subunits (MT-CYB, CYC1 and UQCRFS1), 2 core proteins (UQCRC1 and UQCRC2) and probably 6 low-molecular weight proteins. Requires heme b as cofactor.

The protein localises to the mitochondrion inner membrane. Functionally, component of the ubiquinol-cytochrome c reductase complex (complex III or cytochrome b-c1 complex) that is part of the mitochondrial respiratory chain. The b-c1 complex mediates electron transfer from ubiquinol to cytochrome c. Contributes to the generation of a proton gradient across the mitochondrial membrane that is then used for ATP synthesis. The polypeptide is Cytochrome b (MT-CYB) (Atractaspis micropholis (Mole viper)).